A 107-amino-acid chain; its full sequence is UPF0102 protein Tlet_0667 (107 aa).

Belongs to the UPF0102 family.

The chain is UPF0102 protein Tlet_0667 from Pseudothermotoga lettingae (strain ATCC BAA-301 / DSM 14385 / NBRC 107922 / TMO) (Thermotoga lettingae).